The chain runs to 227 residues: 2-C-methyl-D-erythritol 4-phosphate cytidylyltransferase (227 aa).

This sequence belongs to the IspD/TarI cytidylyltransferase family. IspD subfamily.

The catalysed reaction is 2-C-methyl-D-erythritol 4-phosphate + CTP + H(+) = 4-CDP-2-C-methyl-D-erythritol + diphosphate. Its pathway is isoprenoid biosynthesis; isopentenyl diphosphate biosynthesis via DXP pathway; isopentenyl diphosphate from 1-deoxy-D-xylulose 5-phosphate: step 2/6. In terms of biological role, catalyzes the formation of 4-diphosphocytidyl-2-C-methyl-D-erythritol from CTP and 2-C-methyl-D-erythritol 4-phosphate (MEP). This Deinococcus geothermalis (strain DSM 11300 / CIP 105573 / AG-3a) protein is 2-C-methyl-D-erythritol 4-phosphate cytidylyltransferase.